A 113-amino-acid chain; its full sequence is Photosystem II reaction center Psb28 protein (113 aa).

This sequence belongs to the Psb28 family. As to quaternary structure, part of the photosystem II complex.

Its subcellular location is the cellular thylakoid membrane. The chain is Photosystem II reaction center Psb28 protein from Nostoc punctiforme (strain ATCC 29133 / PCC 73102).